Consider the following 161-residue polypeptide: Peptidyl-prolyl cis-trans isomerase 10 (161 aa).

Residues 1 to 153 (MSVTLHTTSG…VQQKIQNVTI (153 aa)) form the PPIase cyclophilin-type domain.

Belongs to the cyclophilin-type PPIase family. PPIL3 subfamily.

It carries out the reaction [protein]-peptidylproline (omega=180) = [protein]-peptidylproline (omega=0). Its function is as follows. PPIases accelerate the folding of proteins. It catalyzes the cis-trans isomerization of proline imidic peptide bonds in oligopeptides. This Caenorhabditis elegans protein is Peptidyl-prolyl cis-trans isomerase 10 (cyn-10).